Reading from the N-terminus, the 1401-residue chain is DNA-directed RNA polymerase subunit beta'' (1401 aa).

Residues cysteine 224, cysteine 294, cysteine 301, and cysteine 304 each contribute to the Zn(2+) site.

Belongs to the RNA polymerase beta' chain family. RpoC2 subfamily. In plastids the minimal PEP RNA polymerase catalytic core is composed of four subunits: alpha, beta, beta', and beta''. When a (nuclear-encoded) sigma factor is associated with the core the holoenzyme is formed, which can initiate transcription. The cofactor is Zn(2+).

It is found in the plastid. Its subcellular location is the chloroplast. The enzyme catalyses RNA(n) + a ribonucleoside 5'-triphosphate = RNA(n+1) + diphosphate. In terms of biological role, DNA-dependent RNA polymerase catalyzes the transcription of DNA into RNA using the four ribonucleoside triphosphates as substrates. This Nymphaea alba (White water-lily) protein is DNA-directed RNA polymerase subunit beta''.